Here is a 266-residue protein sequence, read N- to C-terminus: 3-methyl-2-oxobutanoate hydroxymethyltransferase (266 aa).

Mg(2+) contacts are provided by aspartate 45 and aspartate 84. 3-methyl-2-oxobutanoate-binding positions include 45–46 (DS), aspartate 84, and lysine 113. Glutamate 115 serves as a coordination point for Mg(2+). Residue glutamate 183 is the Proton acceptor of the active site.

The protein belongs to the PanB family. Homodecamer; pentamer of dimers. It depends on Mg(2+) as a cofactor.

It is found in the cytoplasm. The enzyme catalyses 3-methyl-2-oxobutanoate + (6R)-5,10-methylene-5,6,7,8-tetrahydrofolate + H2O = 2-dehydropantoate + (6S)-5,6,7,8-tetrahydrofolate. It participates in cofactor biosynthesis; (R)-pantothenate biosynthesis; (R)-pantoate from 3-methyl-2-oxobutanoate: step 1/2. In terms of biological role, catalyzes the reversible reaction in which hydroxymethyl group from 5,10-methylenetetrahydrofolate is transferred onto alpha-ketoisovalerate to form ketopantoate. The protein is 3-methyl-2-oxobutanoate hydroxymethyltransferase of Coxiella burnetii (strain Dugway 5J108-111).